A 226-amino-acid polypeptide reads, in one-letter code: Transcriptional activator plp-1 (226 aa).

Belongs to the PUR DNA-binding protein family.

The protein resides in the nucleus. It is found in the chromosome. Probable transcription activator. Binds telomeric DNA containing repeats of the sequence, 5'-TTAGGC-3'. Binds to end-1 promoter, activating end-1 expression, which is required for endoderm specification during embryonic development. The chain is Transcriptional activator plp-1 from Caenorhabditis elegans.